Reading from the N-terminus, the 682-residue chain is Potassium-transporting ATPase ATP-binding subunit (682 aa).

4 helical membrane-spanning segments follow: residues 34-54, 62-82, 219-239, and 254-274; these read PVMFIVWIGSLLTTCISIAMA, ALFSAAISGWLWVTVLFANFA, IALTILLIALTIVFLLATATL, and VLVALLVCLIPTTIGGLLSAI. Asp-307 acts as the 4-aspartylphosphate intermediate in catalysis. ATP is bound by residues Asp-344, Glu-348, 377 to 384, and Lys-395; that span reads FTAQSRMS. Mg(2+)-binding residues include Asp-518 and Asp-522. A run of 3 helical transmembrane segments spans residues 588-608, 616-636, and 656-676; these read FAIIPAAFAATYPQLNALNIM, AILSAVIFNALIIVFLIPLAL, and IYGLGGLLVPFIGIKVIDLLL.

The protein belongs to the cation transport ATPase (P-type) (TC 3.A.3) family. Type IA subfamily. The system is composed of three essential subunits: KdpA, KdpB and KdpC.

It is found in the cell inner membrane. The enzyme catalyses K(+)(out) + ATP + H2O = K(+)(in) + ADP + phosphate + H(+). Part of the high-affinity ATP-driven potassium transport (or Kdp) system, which catalyzes the hydrolysis of ATP coupled with the electrogenic transport of potassium into the cytoplasm. This subunit is responsible for energy coupling to the transport system and for the release of the potassium ions to the cytoplasm. This chain is Potassium-transporting ATPase ATP-binding subunit, found in Escherichia fergusonii (strain ATCC 35469 / DSM 13698 / CCUG 18766 / IAM 14443 / JCM 21226 / LMG 7866 / NBRC 102419 / NCTC 12128 / CDC 0568-73).